The sequence spans 84 residues: uncharacterized protein (84 aa).

3 helical membrane passes run 8–28 (IYFFTIACIIAVIYCVLVNLL), 30–50 (INVIPVVLAFSLILILTISTI), and 63–83 (VLFMLLVLAFFAYAIYKLYIP).

It is found in the cell membrane. This is an uncharacterized protein from Methanocaldococcus jannaschii (strain ATCC 43067 / DSM 2661 / JAL-1 / JCM 10045 / NBRC 100440) (Methanococcus jannaschii).